Consider the following 341-residue polypeptide: Ribosomal RNA small subunit methyltransferase H (341 aa).

S-adenosyl-L-methionine contacts are provided by residues 47–49 (GGY), D64, F91, D109, and Q116.

It belongs to the methyltransferase superfamily. RsmH family.

It is found in the cytoplasm. It catalyses the reaction cytidine(1402) in 16S rRNA + S-adenosyl-L-methionine = N(4)-methylcytidine(1402) in 16S rRNA + S-adenosyl-L-homocysteine + H(+). Its function is as follows. Specifically methylates the N4 position of cytidine in position 1402 (C1402) of 16S rRNA. In Rhizobium etli (strain ATCC 51251 / DSM 11541 / JCM 21823 / NBRC 15573 / CFN 42), this protein is Ribosomal RNA small subunit methyltransferase H.